Consider the following 170-residue polypeptide: Photosystem I assembly protein Ycf3 (170 aa).

3 TPR repeats span residues 35–68 (AFTH…EIDP), 72–105 (SYIL…NSSL), and 120–153 (GEQA…APSN).

It belongs to the Ycf3 family.

The protein resides in the plastid. It is found in the chloroplast thylakoid membrane. In terms of biological role, essential for the assembly of the photosystem I (PSI) complex. May act as a chaperone-like factor to guide the assembly of the PSI subunits. In Anthoceros angustus (Hornwort), this protein is Photosystem I assembly protein Ycf3.